We begin with the raw amino-acid sequence, 105 residues long: Small ribosomal subunit protein uS10 (105 aa).

The protein belongs to the universal ribosomal protein uS10 family. In terms of assembly, part of the 30S ribosomal subunit.

In terms of biological role, involved in the binding of tRNA to the ribosomes. The protein is Small ribosomal subunit protein uS10 of Aster yellows witches'-broom phytoplasma (strain AYWB).